The following is a 647-amino-acid chain: Bifunctional enzyme CysN/CysC (647 aa).

A sulfate adenylyltransferase region spans residues 1–472 (MSHQSDLIAT…TEERAARFGQ (472 aa)). One can recognise a tr-type G domain in the interval 22-239 (KQLLRFITCG…LETVYIGSDR (218 aa)). The G1 stretch occupies residues 31–38 (GSVDDGKS). 31–38 (GSVDDGKS) provides a ligand contact to GTP. The interval 89 to 93 (GITID) is G2. The interval 110–113 (DTPG) is G3. Residues 110-114 (DTPGH) and 165-168 (NKMD) each bind GTP. The G4 stretch occupies residues 165 to 168 (NKMD). Residues 204–206 (SAL) form a G5 region. The tract at residues 473 to 614 (KPATVLLTGL…FPGVTAKYDV (142 aa)) is adenylyl-sulfate kinase. 481–488 (GLTGSGKT) contributes to the ATP binding site.

The protein in the C-terminal section; belongs to the APS kinase family. This sequence in the N-terminal section; belongs to the TRAFAC class translation factor GTPase superfamily. Classic translation factor GTPase family. CysN/NodQ subfamily. As to quaternary structure, heterodimer composed of CysD, the smaller subunit, and CysNC.

The catalysed reaction is sulfate + ATP + H(+) = adenosine 5'-phosphosulfate + diphosphate. It carries out the reaction adenosine 5'-phosphosulfate + ATP = 3'-phosphoadenylyl sulfate + ADP + H(+). It participates in sulfur metabolism; hydrogen sulfide biosynthesis; sulfite from sulfate: step 1/3. It functions in the pathway sulfur metabolism; hydrogen sulfide biosynthesis; sulfite from sulfate: step 2/3. With CysD forms the ATP sulfurylase (ATPS) that catalyzes the adenylation of sulfate producing adenosine 5'-phosphosulfate (APS) and diphosphate, the first enzymatic step in sulfur assimilation pathway. APS synthesis involves the formation of a high-energy phosphoric-sulfuric acid anhydride bond driven by GTP hydrolysis by CysN coupled to ATP hydrolysis by CysD. Its function is as follows. APS kinase catalyzes the synthesis of activated sulfate. This is Bifunctional enzyme CysN/CysC (cysNC) from Rhodopirellula baltica (strain DSM 10527 / NCIMB 13988 / SH1).